The primary structure comprises 1115 residues: Ubiquitin C-terminal hydrolase 13 (1115 aa).

A disordered region spans residues 1 to 51 (MTMMTPPPLDQQEDEEMLVPNPDLVEGPQPMEVAQTDPAATAVENPPPEDP). The MATH domain occupies 53-178 (SLKFTWTIPM…NDTVLIEAEV (126 aa)). The USP domain maps to 198–522 (VGLKNQGATC…NAYMLVYIRE (325 aa)). The active-site Nucleophile is the C207. The Proton acceptor role is filled by H454.

Belongs to the peptidase C19 family. As to quaternary structure, interacts with SIC/RON3. Interacts with RGI1 and RGI2.

The catalysed reaction is Thiol-dependent hydrolysis of ester, thioester, amide, peptide and isopeptide bonds formed by the C-terminal Gly of ubiquitin (a 76-residue protein attached to proteins as an intracellular targeting signal).. Its function is as follows. Recognizes and hydrolyzes the peptide bond at the C-terminal Gly of ubiquitin. Involved in the processing of poly-ubiquitin precursors as well as that of ubiquitinated proteins. Positive regulator of root meristem development that, together with UBP12, prevents the ubiquitination and turnover of RGFR1 induced by the RGF1 hormone peptide, thus influencing PLT1 and PLT2 expression. This Arabidopsis thaliana (Mouse-ear cress) protein is Ubiquitin C-terminal hydrolase 13.